The chain runs to 61 residues: Large ribosomal subunit protein uL29 (61 aa).

This sequence belongs to the universal ribosomal protein uL29 family.

The sequence is that of Large ribosomal subunit protein uL29 from Xanthomonas campestris pv. campestris (strain 8004).